Consider the following 750-residue polypeptide: Cullin-5 (750 aa).

Residues 678–739 (RFFKLQAAIV…QEYIRRTTDD (62 aa)) enclose the Cullin neddylation domain. Lys691 participates in a covalent cross-link: Glycyl lysine isopeptide (Lys-Gly) (interchain with G-Cter in NEDD8).

This sequence belongs to the cullin family. Neddylated; which enhances the ubiquitination activity of SCF-like complex.

Its pathway is protein modification; protein ubiquitination. Functionally, probable core component of cullin-based SCF-like E3 ubiquitin-protein ligase complexes which mediate the ubiquitination and subsequent proteasomal degradation of target proteins. The E3 ubiquitin-protein ligase activity of the complex is dependent on the neddylation of the cullin subunit. The protein is Cullin-5 (culE) of Dictyostelium discoideum (Social amoeba).